The primary structure comprises 239 residues: Tetrahydromethanopterin S-methyltransferase subunit A (239 aa).

The Cytoplasmic portion of the chain corresponds to 1 to 215 (MADKKAPAAG…EAAMIAKFNS (215 aa)). Residue His-85 coordinates 5-hydroxybenzimidazolylcob(I)amide. A helical membrane pass occupies residues 216–238 (GYYNGKIQGIAIGLFLSIVIFSL). Leu-239 is a topological domain (extracellular).

It belongs to the MtrA family. In terms of assembly, the complex is composed of 8 subunits; MtrA, MtrB, MtrC, MtrD, MtrE, MtrF, MtrG and MtrH. It depends on 5-hydroxybenzimidazolylcob(I)amide as a cofactor.

The protein resides in the cell membrane. It catalyses the reaction 5-methyl-5,6,7,8-tetrahydromethanopterin + coenzyme M + 2 Na(+)(in) = 5,6,7,8-tetrahydromethanopterin + methyl-coenzyme M + 2 Na(+)(out). It functions in the pathway one-carbon metabolism; methanogenesis from CO(2); methyl-coenzyme M from 5,10-methylene-5,6,7,8-tetrahydromethanopterin: step 2/2. In terms of biological role, part of a complex that catalyzes the formation of methyl-coenzyme M and tetrahydromethanopterin from coenzyme M and methyl-tetrahydromethanopterin. This is an energy-conserving, sodium-ion translocating step. The chain is Tetrahydromethanopterin S-methyltransferase subunit A from Methanococcus maripaludis (strain DSM 14266 / JCM 13030 / NBRC 101832 / S2 / LL).